A 248-amino-acid polypeptide reads, in one-letter code: Pyridoxine 5'-phosphate synthase (248 aa).

N12 serves as a coordination point for 3-amino-2-oxopropyl phosphate. 14-15 (DH) is a binding site for 1-deoxy-D-xylulose 5-phosphate. R23 serves as a coordination point for 3-amino-2-oxopropyl phosphate. Catalysis depends on H48, which acts as the Proton acceptor. 1-deoxy-D-xylulose 5-phosphate-binding residues include R50 and H55. E75 serves as the catalytic Proton acceptor. T105 contacts 1-deoxy-D-xylulose 5-phosphate. H196 serves as the catalytic Proton donor. 3-amino-2-oxopropyl phosphate contacts are provided by residues G197 and 218–219 (GH).

It belongs to the PNP synthase family. In terms of assembly, homooctamer; tetramer of dimers.

It is found in the cytoplasm. The enzyme catalyses 3-amino-2-oxopropyl phosphate + 1-deoxy-D-xylulose 5-phosphate = pyridoxine 5'-phosphate + phosphate + 2 H2O + H(+). It functions in the pathway cofactor biosynthesis; pyridoxine 5'-phosphate biosynthesis; pyridoxine 5'-phosphate from D-erythrose 4-phosphate: step 5/5. Functionally, catalyzes the complicated ring closure reaction between the two acyclic compounds 1-deoxy-D-xylulose-5-phosphate (DXP) and 3-amino-2-oxopropyl phosphate (1-amino-acetone-3-phosphate or AAP) to form pyridoxine 5'-phosphate (PNP) and inorganic phosphate. This is Pyridoxine 5'-phosphate synthase from Pseudomonas fluorescens (strain ATCC BAA-477 / NRRL B-23932 / Pf-5).